A 216-amino-acid chain; its full sequence is Transmembrane protein 186 (216 aa).

Residues 1–68 are Mitochondrial matrix-facing; that stretch reads MAFLLRAVPR…IYRFNAIRAL (68 aa). Residues 69–91 form a helical membrane-spanning segment; the sequence is GFLSRLKLAQTAVTVVALPPGFY. Residues 92 to 103 are Mitochondrial intermembrane-facing; sequence CYSQGLMTLSSL. A helical membrane pass occupies residues 104–124; sequence GLMSGIASFALVMLCWMSHFF. The Mitochondrial matrix segment spans residues 125–216; sequence RRLVGILYVN…GTLATLKNSK (92 aa).

This sequence belongs to the TMEM186 family. As to quaternary structure, part of the mitochondrial complex I assembly/MCIA complex that comprises at least the core subunits TMEM126B, NDUFAF1, ECSIT and ACAD9 and complement subunits such as COA1 and TMEM186. Interacts with MT-ND3.

Its subcellular location is the mitochondrion inner membrane. As part of the MCIA complex, required for efficient assembly of the mitochondrial complex I. The sequence is that of Transmembrane protein 186 from Rattus norvegicus (Rat).